We begin with the raw amino-acid sequence, 428 residues long: Divergent protein kinase domain 1A (428 aa).

Over M1–K27 the chain is Cytoplasmic. The helical transmembrane segment at Y28–S48 threads the bilayer. At T49 to S428 the chain is on the lumenal side.

Belongs to the DIPK family. In terms of processing, among the many cysteines in the lumenal domain, most are probably involved in disulfide bonds.

The protein localises to the endoplasmic reticulum membrane. The sequence is that of Divergent protein kinase domain 1A (dipk1a) from Danio rerio (Zebrafish).